Here is a 130-residue protein sequence, read N- to C-terminus: Small ribosomal subunit protein uS11c (130 aa).

The protein belongs to the universal ribosomal protein uS11 family. Part of the 30S ribosomal subunit.

Its subcellular location is the plastid. The protein localises to the chloroplast. This is Small ribosomal subunit protein uS11c from Stigeoclonium helveticum (Green alga).